Reading from the N-terminus, the 414-residue chain is Serine hydroxymethyltransferase (414 aa).

(6S)-5,6,7,8-tetrahydrofolate is bound by residues leucine 121 and 125-127; that span reads GHL. Residue lysine 229 is modified to N6-(pyridoxal phosphate)lysine.

This sequence belongs to the SHMT family. As to quaternary structure, homodimer. It depends on pyridoxal 5'-phosphate as a cofactor.

It is found in the cytoplasm. The enzyme catalyses (6R)-5,10-methylene-5,6,7,8-tetrahydrofolate + glycine + H2O = (6S)-5,6,7,8-tetrahydrofolate + L-serine. The protein operates within one-carbon metabolism; tetrahydrofolate interconversion. It functions in the pathway amino-acid biosynthesis; glycine biosynthesis; glycine from L-serine: step 1/1. Catalyzes the reversible interconversion of serine and glycine with tetrahydrofolate (THF) serving as the one-carbon carrier. This reaction serves as the major source of one-carbon groups required for the biosynthesis of purines, thymidylate, methionine, and other important biomolecules. Also exhibits THF-independent aldolase activity toward beta-hydroxyamino acids, producing glycine and aldehydes, via a retro-aldol mechanism. The protein is Serine hydroxymethyltransferase of Acidovorax ebreus (strain TPSY) (Diaphorobacter sp. (strain TPSY)).